The primary structure comprises 430 residues: 3-phosphoshikimate 1-carboxyvinyltransferase (430 aa).

3-phosphoshikimate-binding residues include lysine 20, serine 21, and arginine 25. Residue lysine 20 participates in phosphoenolpyruvate binding. Glycine 92 and arginine 120 together coordinate phosphoenolpyruvate. Residues serine 166, glutamine 168, aspartate 312, and lysine 339 each coordinate 3-phosphoshikimate. Glutamine 168 provides a ligand contact to phosphoenolpyruvate. Residue aspartate 312 is the Proton acceptor of the active site. Phosphoenolpyruvate-binding residues include arginine 343 and arginine 387.

It belongs to the EPSP synthase family. In terms of assembly, monomer.

It is found in the cytoplasm. The enzyme catalyses 3-phosphoshikimate + phosphoenolpyruvate = 5-O-(1-carboxyvinyl)-3-phosphoshikimate + phosphate. The protein operates within metabolic intermediate biosynthesis; chorismate biosynthesis; chorismate from D-erythrose 4-phosphate and phosphoenolpyruvate: step 6/7. In terms of biological role, catalyzes the transfer of the enolpyruvyl moiety of phosphoenolpyruvate (PEP) to the 5-hydroxyl of shikimate-3-phosphate (S3P) to produce enolpyruvyl shikimate-3-phosphate and inorganic phosphate. This chain is 3-phosphoshikimate 1-carboxyvinyltransferase, found in Lactococcus lactis subsp. cremoris (strain MG1363).